Here is an 812-residue protein sequence, read N- to C-terminus: cAMP-regulated phosphoprotein 21 (812 aa).

Residues M1 to I130 are disordered. S2 carries the post-translational modification N-acetylserine. The segment covering Q9–E25 has biased composition (low complexity). Residues E32 to S58 adopt a coiled-coil conformation. S33 carries the phosphoserine modification. The segment covering L40–R53 has biased composition (basic and acidic residues). At S56 the chain carries Phosphoserine. Residues I90–L100 are compositionally biased toward low complexity. Positions E102–I130 are enriched in basic and acidic residues. S134 is subject to Phosphoserine. Residues R164–T227 form the R3H domain. Residues R228–S300 form the SUZ domain. The interval S246–I281 is disordered. S300 is subject to Phosphoserine. 3 disordered regions span residues R332–S436, H485–P544, and L561–P632. Positions G339–S349 are enriched in low complexity. The segment covering N351–R360 has biased composition (basic and acidic residues). The span at A361–N373 shows a compositional bias: polar residues. S363 and S383 each carry phosphoserine. Residues T391 to S423 are compositionally biased toward low complexity. Phosphoserine is present on S562. The segment covering L582 to P602 has biased composition (polar residues). Pro residues predominate over residues Q619–P632. Residue R655 is modified to Asymmetric dimethylarginine.

In terms of assembly, interacts with CALM1. Phosphorylation at Ser-56 favors interaction with CALM1. Post-translationally, isoform 1 is methylated by CARM1 at Arg-655 in immature thymocytes. Isoform 2 is expressed in brain. Isoform 1 is present in immature thymocytes (at protein level).

The protein localises to the cytoplasm. In terms of biological role, isoform 2 may act as a competitive inhibitor of calmodulin-dependent enzymes such as calcineurin in neurons. The chain is cAMP-regulated phosphoprotein 21 (ARPP21) from Homo sapiens (Human).